The primary structure comprises 383 residues: S-adenosylmethionine synthase (383 aa).

Residue H15 participates in ATP binding. D17 serves as a coordination point for Mg(2+). E43 provides a ligand contact to K(+). L-methionine contacts are provided by E56 and Q99. Residues 99–109 (QSPDINQGVDR) form a flexible loop region. ATP is bound by residues 164–166 (DAK), 230–231 (RF), D239, 245–246 (RK), A262, and K266. L-methionine is bound at residue D239. Position 270 (K270) interacts with L-methionine.

The protein belongs to the AdoMet synthase family. As to quaternary structure, homotetramer; dimer of dimers. The cofactor is Mg(2+). K(+) is required as a cofactor.

The protein localises to the cytoplasm. The enzyme catalyses L-methionine + ATP + H2O = S-adenosyl-L-methionine + phosphate + diphosphate. It functions in the pathway amino-acid biosynthesis; S-adenosyl-L-methionine biosynthesis; S-adenosyl-L-methionine from L-methionine: step 1/1. Catalyzes the formation of S-adenosylmethionine (AdoMet) from methionine and ATP. The overall synthetic reaction is composed of two sequential steps, AdoMet formation and the subsequent tripolyphosphate hydrolysis which occurs prior to release of AdoMet from the enzyme. The chain is S-adenosylmethionine synthase from Shewanella denitrificans (strain OS217 / ATCC BAA-1090 / DSM 15013).